Here is a 299-residue protein sequence, read N- to C-terminus: Phosphoribosylaminoimidazole-succinocarboxamide synthase (299 aa).

Residues 259 to 279 (PESGWDRKSEQPPPPLPQHVV) form a disordered region.

It belongs to the SAICAR synthetase family.

It carries out the reaction 5-amino-1-(5-phospho-D-ribosyl)imidazole-4-carboxylate + L-aspartate + ATP = (2S)-2-[5-amino-1-(5-phospho-beta-D-ribosyl)imidazole-4-carboxamido]succinate + ADP + phosphate + 2 H(+). Its pathway is purine metabolism; IMP biosynthesis via de novo pathway; 5-amino-1-(5-phospho-D-ribosyl)imidazole-4-carboxamide from 5-amino-1-(5-phospho-D-ribosyl)imidazole-4-carboxylate: step 1/2. The polypeptide is Phosphoribosylaminoimidazole-succinocarboxamide synthase (Streptomyces avermitilis (strain ATCC 31267 / DSM 46492 / JCM 5070 / NBRC 14893 / NCIMB 12804 / NRRL 8165 / MA-4680)).